A 426-amino-acid chain; its full sequence is uncharacterized protein (426 aa).

Solcar repeat units lie at residues 125–216 (KNNV…MKRV), 226–315 (HSPL…LKRT), and 334–422 (PNGL…CKKW). Transmembrane regions (helical) follow at residues 130 to 151 (YFIS…LDRL), 193 to 213 (GINV…YEAM), 229 to 249 (LYSY…IYPV), 290 to 310 (GVLV…GTFE), 336 to 356 (GLVM…VFPL), and 394 to 415 (LYKG…SYLV).

It belongs to the mitochondrial carrier (TC 2.A.29) family.

The protein resides in the mitochondrion inner membrane. This is an uncharacterized protein from Schizosaccharomyces pombe (strain 972 / ATCC 24843) (Fission yeast).